The sequence spans 357 residues: Sulfate/thiosulfate import ATP-binding protein CysA (357 aa).

The region spanning 3–237 (IQIQGVSKQY…PASPFVYDFL (235 aa)) is the ABC transporter domain. 35–42 (GPSGSGKT) serves as a coordination point for ATP.

It belongs to the ABC transporter superfamily. Sulfate/tungstate importer (TC 3.A.1.6) family. As to quaternary structure, the complex is composed of two ATP-binding proteins (CysA), two transmembrane proteins (CysT and CysW) and a solute-binding protein (CysP).

The protein resides in the cell membrane. The catalysed reaction is sulfate(out) + ATP + H2O = sulfate(in) + ADP + phosphate + H(+). It carries out the reaction thiosulfate(out) + ATP + H2O = thiosulfate(in) + ADP + phosphate + H(+). In terms of biological role, part of the ABC transporter complex CysAWTP involved in sulfate/thiosulfate import. Responsible for energy coupling to the transport system. The polypeptide is Sulfate/thiosulfate import ATP-binding protein CysA (Bacillus cereus (strain ATCC 10987 / NRS 248)).